A 277-amino-acid chain; its full sequence is Large ribosomal subunit protein uL2 (277 aa).

2 disordered regions span residues 32–58 (KSLT…RGGG) and 225–277 (VAMN…RRNK). A compositionally biased stretch (basic residues) spans 258 to 277 (YKTRKKKRYSDKFIIKRRNK).

The protein belongs to the universal ribosomal protein uL2 family. In terms of assembly, part of the 50S ribosomal subunit. Forms a bridge to the 30S subunit in the 70S ribosome.

Its function is as follows. One of the primary rRNA binding proteins. Required for association of the 30S and 50S subunits to form the 70S ribosome, for tRNA binding and peptide bond formation. It has been suggested to have peptidyltransferase activity; this is somewhat controversial. Makes several contacts with the 16S rRNA in the 70S ribosome. The sequence is that of Large ribosomal subunit protein uL2 from Borreliella afzelii (strain PKo) (Borrelia afzelii).